The sequence spans 362 residues: Very-long-chain (3R)-3-hydroxyacyl-CoA dehydratase (362 aa).

The Cytoplasmic portion of the chain corresponds to 1–149 (MADCSLRPHV…DPFKHLKKGY (149 aa)). A CS domain is found at 5-94 (SLRPHVHWAQ…KESSWWERLT (90 aa)). Residues 111-135 (LDESDAEMELKEKEEEKINKMKIES) are a coiled coil. A helical membrane pass occupies residues 150 to 170 (LIMYNLVQFLGFSWIFVNMTV). The Lumenal portion of the chain corresponds to 171–189 (RLFILGKDSFYDTFHTIAD). The helical transmembrane segment at 190–210 (MMYFCQTLALMEILNSLIGLV) threads the bilayer. Residues 211-212 (RS) lie on the Cytoplasmic side of the membrane. A helical membrane pass occupies residues 213-233 (PLIPAVIQVFGRNFILFVVLG). The Lumenal portion of the chain corresponds to 234 to 242 (SLEEMQSKA). Residues 243–263 (VVFFLFYFWSIIELFRYPYYM) form a helical membrane-spanning segment. The Cytoplasmic portion of the chain corresponds to 264–282 (LSCMGIEWKPLTWLRYTSW). Residues 283 to 303 (IPLYPLGGLAEAVCLIQSIPI) form a helical membrane-spanning segment. Active-site residues include Tyr-286 and Glu-293. Residues 304–319 (FSETGKFSLGLPNPLN) lie on the Lumenal side of the membrane. The helical transmembrane segment at 320-340 (VTIQFSFLLQMYLIALFLGLF) threads the bilayer. At 341 to 362 (VNFRYLYKQRKQHLGPKKRKMK) the chain is on the cytoplasmic side.

It belongs to the very long-chain fatty acids dehydratase HACD family.

The protein localises to the endoplasmic reticulum membrane. It carries out the reaction a very-long-chain (3R)-3-hydroxyacyl-CoA = a very-long-chain (2E)-enoyl-CoA + H2O. The catalysed reaction is (3R)-hydroxyhexadecanoyl-CoA = (2E)-hexadecenoyl-CoA + H2O. The protein operates within lipid metabolism; fatty acid biosynthesis. In terms of biological role, catalyzes the third of the four reactions of the long-chain fatty acids elongation cycle. This endoplasmic reticulum-bound enzymatic process, allows the addition of two carbons to the chain of long- and very long-chain fatty acids/VLCFAs per cycle. This enzyme catalyzes the dehydration of the 3-hydroxyacyl-CoA intermediate into trans-2,3-enoyl-CoA, within each cycle of fatty acid elongation. Thereby, it participates in the production of VLCFAs of different chain lengths that are involved in multiple biological processes as precursors of membrane lipids and lipid mediators. Involved in Rac1-signaling pathways leading to the modulation of gene expression. This chain is Very-long-chain (3R)-3-hydroxyacyl-CoA dehydratase, found in Gallus gallus (Chicken).